Here is a 154-residue protein sequence, read N- to C-terminus: Endoribonuclease YbeY (154 aa).

3 residues coordinate Zn(2+): H118, H122, and H128.

The protein belongs to the endoribonuclease YbeY family. The cofactor is Zn(2+).

The protein localises to the cytoplasm. Its function is as follows. Single strand-specific metallo-endoribonuclease involved in late-stage 70S ribosome quality control and in maturation of the 3' terminus of the 16S rRNA. This Chloroflexus aurantiacus (strain ATCC 29366 / DSM 635 / J-10-fl) protein is Endoribonuclease YbeY.